Here is a 378-residue protein sequence, read N- to C-terminus: Queuine tRNA-ribosyltransferase (378 aa).

Catalysis depends on Asp91, which acts as the Proton acceptor. Substrate is bound by residues 91 to 95, Asp145, Gln189, and Gly216; that span reads DSGGF. The tract at residues 247–253 is RNA binding; the sequence is GVGKPED. Asp266 serves as the catalytic Nucleophile. The segment at 271–275 is RNA binding; important for wobble base 34 recognition; the sequence is TRNAR. The Zn(2+) site is built by Cys304, Cys306, Cys309, and His335.

It belongs to the queuine tRNA-ribosyltransferase family. In terms of assembly, homodimer. Within each dimer, one monomer is responsible for RNA recognition and catalysis, while the other monomer binds to the replacement base PreQ1. Requires Zn(2+) as cofactor.

It carries out the reaction 7-aminomethyl-7-carbaguanine + guanosine(34) in tRNA = 7-aminomethyl-7-carbaguanosine(34) in tRNA + guanine. It functions in the pathway tRNA modification; tRNA-queuosine biosynthesis. Catalyzes the base-exchange of a guanine (G) residue with the queuine precursor 7-aminomethyl-7-deazaguanine (PreQ1) at position 34 (anticodon wobble position) in tRNAs with GU(N) anticodons (tRNA-Asp, -Asn, -His and -Tyr). Catalysis occurs through a double-displacement mechanism. The nucleophile active site attacks the C1' of nucleotide 34 to detach the guanine base from the RNA, forming a covalent enzyme-RNA intermediate. The proton acceptor active site deprotonates the incoming PreQ1, allowing a nucleophilic attack on the C1' of the ribose to form the product. After dissociation, two additional enzymatic reactions on the tRNA convert PreQ1 to queuine (Q), resulting in the hypermodified nucleoside queuosine (7-(((4,5-cis-dihydroxy-2-cyclopenten-1-yl)amino)methyl)-7-deazaguanosine). In Vibrio atlanticus (strain LGP32) (Vibrio splendidus (strain Mel32)), this protein is Queuine tRNA-ribosyltransferase.